A 270-amino-acid chain; its full sequence is Elongation factor Ts (270 aa).

The involved in Mg(2+) ion dislocation from EF-Tu stretch occupies residues 76-79; it reads TDFV.

This sequence belongs to the EF-Ts family.

It is found in the cytoplasm. Functionally, associates with the EF-Tu.GDP complex and induces the exchange of GDP to GTP. It remains bound to the aminoacyl-tRNA.EF-Tu.GTP complex up to the GTP hydrolysis stage on the ribosome. This chain is Elongation factor Ts, found in Corynebacterium aurimucosum (strain ATCC 700975 / DSM 44827 / CIP 107346 / CN-1) (Corynebacterium nigricans).